The sequence spans 198 residues: LexA repressor (198 aa).

The H-T-H motif DNA-binding region spans 28-47; that stretch reads IRDIAKHFKLTPRGAHIHVL. Residues Ser120 and Lys157 each act as for autocatalytic cleavage activity in the active site.

The protein belongs to the peptidase S24 family. Homodimer.

The enzyme catalyses Hydrolysis of Ala-|-Gly bond in repressor LexA.. In terms of biological role, represses a number of genes involved in the response to DNA damage (SOS response), including recA and lexA. In the presence of single-stranded DNA, RecA interacts with LexA causing an autocatalytic cleavage which disrupts the DNA-binding part of LexA, leading to derepression of the SOS regulon and eventually DNA repair. The protein is LexA repressor of Thermosipho africanus (strain TCF52B).